The primary structure comprises 435 residues: Ribulose bisphosphate carboxylase large chain (435 aa).

An N6,N6,N6-trimethyllysine modification is found at Lys5. Substrate-binding residues include Asn114 and Thr164. Residue Lys166 is the Proton acceptor of the active site. Residue Lys168 participates in substrate binding. Lys192, Asp194, and Glu195 together coordinate Mg(2+). At Lys192 the chain carries N6-carboxylysine. His285 acts as the Proton acceptor in catalysis. Residues Arg286, His318, and Ser370 each contribute to the substrate site.

It belongs to the RuBisCO large chain family. Type I subfamily. As to quaternary structure, heterohexadecamer of 8 large chains and 8 small chains; disulfide-linked. The disulfide link is formed within the large subunit homodimers. Mg(2+) serves as cofactor. Post-translationally, the disulfide bond which can form in the large chain dimeric partners within the hexadecamer appears to be associated with oxidative stress and protein turnover.

The protein localises to the plastid. The protein resides in the chloroplast. It carries out the reaction 2 (2R)-3-phosphoglycerate + 2 H(+) = D-ribulose 1,5-bisphosphate + CO2 + H2O. It catalyses the reaction D-ribulose 1,5-bisphosphate + O2 = 2-phosphoglycolate + (2R)-3-phosphoglycerate + 2 H(+). In terms of biological role, ruBisCO catalyzes two reactions: the carboxylation of D-ribulose 1,5-bisphosphate, the primary event in carbon dioxide fixation, as well as the oxidative fragmentation of the pentose substrate in the photorespiration process. Both reactions occur simultaneously and in competition at the same active site. The polypeptide is Ribulose bisphosphate carboxylase large chain (Drosera burmannii (Burmese sundew)).